The primary structure comprises 367 residues: Flagellar P-ring protein (367 aa).

Positions Met1–Ala22 are cleaved as a signal peptide.

Belongs to the FlgI family. The basal body constitutes a major portion of the flagellar organelle and consists of four rings (L,P,S, and M) mounted on a central rod.

Its subcellular location is the periplasm. It localises to the bacterial flagellum basal body. Its function is as follows. Assembles around the rod to form the L-ring and probably protects the motor/basal body from shearing forces during rotation. The chain is Flagellar P-ring protein from Legionella pneumophila (strain Lens).